The primary structure comprises 501 residues: Cytochrome P450 71D6 (501 aa).

Heme is bound at residue cysteine 442.

The protein belongs to the cytochrome P450 family. Requires heme as cofactor.

This Solanum chacoense (Chaco potato) protein is Cytochrome P450 71D6 (CYP71D6).